Here is a 508-residue protein sequence, read N- to C-terminus: Cytochrome c-552 (508 aa).

The first 23 residues, 1–23, serve as a signal peptide directing secretion; it reads MNKSYKILLTGSVIAIGAMGLMA. His103 contacts heme c. Positions 131, 134, and 135 each coordinate heme. Positions 169, 172, 173, 211, 214, and 215 each coordinate heme c. Ca(2+) is bound by residues Glu217, Tyr218, Lys274, and Gln276. Substrate is bound at residue Tyr218. His277 lines the substrate pocket. The heme c site is built by His288, Cys295, Cys298, His299, His313, Cys326, Cys329, His330, and His405. Positions 485–508 are disordered; it reads GRLDPKTLEGMSNKSSWSQTELSQ. A compositionally biased stretch (polar residues) spans 494-508; that stretch reads GMSNKSSWSQTELSQ.

The protein belongs to the cytochrome c-552 family. The cofactor is Ca(2+). Heme c is required as a cofactor.

It localises to the periplasm. The catalysed reaction is 6 Fe(III)-[cytochrome c] + NH4(+) + 2 H2O = 6 Fe(II)-[cytochrome c] + nitrite + 8 H(+). The protein operates within nitrogen metabolism; nitrate reduction (assimilation). Catalyzes the reduction of nitrite to ammonia, consuming six electrons in the process. This is Cytochrome c-552 from Desulfotalea psychrophila (strain LSv54 / DSM 12343).